The chain runs to 446 residues: Phosphoglucosamine mutase (446 aa).

Ser101 functions as the Phosphoserine intermediate in the catalytic mechanism. Mg(2+)-binding residues include Ser101, Asp240, Asp242, and Asp244. Residue Ser101 is modified to Phosphoserine.

This sequence belongs to the phosphohexose mutase family. The cofactor is Mg(2+). Post-translationally, activated by phosphorylation.

The enzyme catalyses alpha-D-glucosamine 1-phosphate = D-glucosamine 6-phosphate. Functionally, catalyzes the conversion of glucosamine-6-phosphate to glucosamine-1-phosphate. In Pseudomonas putida (strain ATCC 47054 / DSM 6125 / CFBP 8728 / NCIMB 11950 / KT2440), this protein is Phosphoglucosamine mutase.